Here is a 178-residue protein sequence, read N- to C-terminus: Ribulose bisphosphate carboxylase small subunit, chloroplastic 2 (178 aa).

The transit peptide at 1–54 directs the protein to the chloroplast; the sequence is MASISSTVATVSRAAPAQANMVAPFTGLKSNVAFPATKKANDFSTLPSNGGRVQ.

It belongs to the RuBisCO small chain family. In terms of assembly, heterohexadecamer of 8 large and 8 small subunits.

It localises to the plastid. The protein resides in the chloroplast. Functionally, ruBisCO catalyzes two reactions: the carboxylation of D-ribulose 1,5-bisphosphate, the primary event in carbon dioxide fixation, as well as the oxidative fragmentation of the pentose substrate. Both reactions occur simultaneously and in competition at the same active site. Although the small subunit is not catalytic it is essential for maximal activity. The sequence is that of Ribulose bisphosphate carboxylase small subunit, chloroplastic 2 from Flaveria pringlei.